Reading from the N-terminus, the 822-residue chain is Penicillin-binding protein 1A (822 aa).

The Cytoplasmic portion of the chain corresponds to 1 to 5 (MRLLK). The helical; Signal-anchor for type II membrane protein transmembrane segment at 6–26 (FLWWTCVTLICGVLLSFSGAY) threads the bilayer. Residues 27–822 (LYLSPSLPSV…DDEGAPIDLF (796 aa)) lie on the Periplasmic side of the membrane. Residues 48 to 216 (LKVYSEDGKL…SRYNPLVNPT (169 aa)) are transglycosylase. Catalysis depends on Glu-86, which acts as the Proton donor; for transglycosylase activity. The segment at 403–744 (IRVQRQEDGT…GTVALPIWIR (342 aa)) is transpeptidase. The active-site Acyl-ester intermediate; for transpeptidase activity is the Ser-461. Disordered regions lie at residues 614–654 (AADA…FEPT) and 790–822 (KNEDTPPSVNELPPGSFPGSPLPDDEGAPIDLF). Residues 812-822 (PDDEGAPIDLF) show a composition bias toward acidic residues.

The protein in the N-terminal section; belongs to the glycosyltransferase 51 family. It in the C-terminal section; belongs to the transpeptidase family.

It localises to the cell inner membrane. It catalyses the reaction [GlcNAc-(1-&gt;4)-Mur2Ac(oyl-L-Ala-gamma-D-Glu-L-Lys-D-Ala-D-Ala)](n)-di-trans,octa-cis-undecaprenyl diphosphate + beta-D-GlcNAc-(1-&gt;4)-Mur2Ac(oyl-L-Ala-gamma-D-Glu-L-Lys-D-Ala-D-Ala)-di-trans,octa-cis-undecaprenyl diphosphate = [GlcNAc-(1-&gt;4)-Mur2Ac(oyl-L-Ala-gamma-D-Glu-L-Lys-D-Ala-D-Ala)](n+1)-di-trans,octa-cis-undecaprenyl diphosphate + di-trans,octa-cis-undecaprenyl diphosphate + H(+). It carries out the reaction Preferential cleavage: (Ac)2-L-Lys-D-Ala-|-D-Ala. Also transpeptidation of peptidyl-alanyl moieties that are N-acyl substituents of D-alanine.. It functions in the pathway cell wall biogenesis; peptidoglycan biosynthesis. Functionally, cell wall formation. Synthesis of cross-linked peptidoglycan from the lipid intermediates. The enzyme has a penicillin-insensitive transglycosylase N-terminal domain (formation of linear glycan strands) and a penicillin-sensitive transpeptidase C-terminal domain (cross-linking of the peptide subunits). The protein is Penicillin-binding protein 1A (mrcA) of Pseudomonas aeruginosa (strain ATCC 15692 / DSM 22644 / CIP 104116 / JCM 14847 / LMG 12228 / 1C / PRS 101 / PAO1).